Consider the following 76-residue polypeptide: Protein RALF-like 26 (76 aa).

An N-terminal signal peptide occupies residues 1–22 (MKAWMIILLVICVAVVVEQSEA). The cysteines at positions 37 and 46 are disulfide-linked. Asn-61 is a glycosylation site (N-linked (GlcNAc...) asparagine). The cysteines at positions 66 and 72 are disulfide-linked.

Belongs to the plant rapid alkalinization factor (RALF) family.

The protein resides in the secreted. Functionally, cell signaling peptide that may regulate plant stress, growth, and development. Mediates a rapid alkalinization of extracellular space by mediating a transient increase in the cytoplasmic Ca(2+) concentration leading to a calcium-dependent signaling events through a cell surface receptor and a concomitant activation of some intracellular mitogen-activated protein kinases. This Arabidopsis thaliana (Mouse-ear cress) protein is Protein RALF-like 26 (RALFL26).